The chain runs to 109 residues: MFGKGGMGNLMKQAQQMQERMQKLQEEIANMEVVGESGAGLVKVTITGSHSVRRVNIDESLMEDDKEMLEDLIAAAFNDAARRVEETQKEKMAAITGGMQLPPGMKMPF.

The interval 1–22 (MFGKGGMGNLMKQAQQMQERMQ) is disordered.

Belongs to the YbaB/EbfC family. As to quaternary structure, homodimer.

The protein resides in the cytoplasm. Its subcellular location is the nucleoid. Functionally, binds to DNA and alters its conformation. May be involved in regulation of gene expression, nucleoid organization and DNA protection. The polypeptide is Nucleoid-associated protein VV2410 (Vibrio vulnificus (strain YJ016)).